Reading from the N-terminus, the 209-residue chain is Probable calcium-binding protein CML36 (209 aa).

Residues 22–59 form a disordered region; the sequence is SKSPTAFSFGSASSSSGQDCKNSGGDGGGGSVTPTSIL. The span at 27-38 shows a compositional bias: low complexity; it reads AFSFGSASSSSG. 4 consecutive EF-hand domains span residues 66–101, 103–138, 139–174, and 176–209; these read YSYV…LGPD, LTEE…LDPA, RDST…IGDE, and CTLD…DLQR. D79, D81, D83, and D90 together coordinate Ca(2+). Ca(2+) is bound by residues D152, D154, D156, E163, D189, D191, D193, and E200.

Its function is as follows. Potential calcium sensor. This chain is Probable calcium-binding protein CML36 (CML36), found in Arabidopsis thaliana (Mouse-ear cress).